Here is a 169-residue protein sequence, read N- to C-terminus: Sulfopyruvate decarboxylase subunit alpha (169 aa).

The protein belongs to the ComD family. Heterododecamer composed of 6 subunits alpha and 6 subunits beta.

It catalyses the reaction 3-sulfopyruvate + H(+) = sulfoacetaldehyde + CO2. It participates in cofactor biosynthesis; coenzyme M biosynthesis; sulfoacetaldehyde from phosphoenolpyruvate and sulfite: step 4/4. With respect to regulation, inhibited by oxygen when heated in air at 80 degrees Celsius. The enzyme is reactivated by addition of dithionite. Involved in the biosynthesis of the coenzyme M (2-mercaptoethanesulfonic acid). Catalyzes the decarboxylation of sulfopyruvate to sulfoacetaldehyde. The chain is Sulfopyruvate decarboxylase subunit alpha from Methanocaldococcus jannaschii (strain ATCC 43067 / DSM 2661 / JAL-1 / JCM 10045 / NBRC 100440) (Methanococcus jannaschii).